Consider the following 150-residue polypeptide: Small ribosomal subunit protein bS6 (150 aa).

The interval 92-150 (KGINKPAKPKKTFKKTFVARKFSRDDESKTHSTEEPRRANTKSTYKKSTSFSQDNKNKK) is disordered. The segment covering 98-109 (AKPKKTFKKTFV) has biased composition (basic residues). Residues 113-129 (FSRDDESKTHSTEEPRR) are compositionally biased toward basic and acidic residues. Low complexity predominate over residues 132–141 (TKSTYKKSTS).

The protein belongs to the bacterial ribosomal protein bS6 family.

Functionally, binds together with bS18 to 16S ribosomal RNA. In Mycoplasmopsis pulmonis (strain UAB CTIP) (Mycoplasma pulmonis), this protein is Small ribosomal subunit protein bS6.